We begin with the raw amino-acid sequence, 64 residues long: Defensin-like protein 123 (64 aa).

Disulfide bonds link Cys19/Cys62, Cys29/Cys49, Cys34/Cys56, and Cys38/Cys58.

This sequence belongs to the DEFL family.

This is Defensin-like protein 123 from Arabidopsis thaliana (Mouse-ear cress).